The sequence spans 447 residues: MAQKLWEKSVEVNKDIERFTVGRDREMDLYLAKHDVLGSMAHITMLESIGLLTKEELAQLLTELKDIYASAERGEFVIEEGVEDVHSQVELMLTRRLGDVGKKIHSGRSRNDQVLLDLKLFTRTQIREVAEAVEQLFHVLIRQSERYKNVLMPGYTHLQIAMPSSFGLWFGAYAESLVDDMLFLQAAFKMCNKNPLGSAAGYGSSFPLNRTMTTELLGFDSLNYNVVYAQMGRGKMERNVAFALATLAGTISKLAFDACMFNSQNFGFVKLPDECTTGSSIMPHKKNPDVFELTRAKCNKLQSLPQQIMMIANNLPSGYFRDLQIIKEVFLPAFQELKDCLQMTTYIMNEIKVNEHILDDDKYLFIFSVEEVNRLAREGMPFRDAYKKVGLDIEAGHFSHDKQVHHTHEGSIGNLCNDEISALMQRTIEGFNFQGMEQAEKTLLGRK.

This sequence belongs to the lyase 1 family. Argininosuccinate lyase subfamily.

Its subcellular location is the cytoplasm. It catalyses the reaction 2-(N(omega)-L-arginino)succinate = fumarate + L-arginine. Its pathway is amino-acid biosynthesis; L-arginine biosynthesis; L-arginine from L-ornithine and carbamoyl phosphate: step 3/3. This is Argininosuccinate lyase from Bacteroides fragilis (strain YCH46).